The chain runs to 91 residues: DNA-directed RNA polymerase subunit omega (91 aa).

This sequence belongs to the RNA polymerase subunit omega family. The RNAP catalytic core consists of 2 alpha, 1 beta, 1 beta' and 1 omega subunit. When a sigma factor is associated with the core the holoenzyme is formed, which can initiate transcription.

The enzyme catalyses RNA(n) + a ribonucleoside 5'-triphosphate = RNA(n+1) + diphosphate. Its function is as follows. Promotes RNA polymerase assembly. Latches the N- and C-terminal regions of the beta' subunit thereby facilitating its interaction with the beta and alpha subunits. This chain is DNA-directed RNA polymerase subunit omega, found in Syntrophus aciditrophicus (strain SB).